An 834-amino-acid polypeptide reads, in one-letter code: Periplasmic nitrate reductase (834 aa).

The tat-type signal signal peptide spans 1–31 (MTGELTRREMLKAHAAGIAAATAGIALPAAA). In terms of domain architecture, 4Fe-4S Mo/W bis-MGD-type spans 43-99 (ITWSKAPCRFCGTGCGVMVGVKEGQVVATHGDMQAEVNRGLNCIKGYFLSKIMYGTD). [4Fe-4S] cluster contacts are provided by cysteine 50, cysteine 53, cysteine 57, and cysteine 85. Mo-bis(molybdopterin guanine dinucleotide)-binding positions include lysine 87, glutamine 154, asparagine 179, cysteine 183, 216–223 (WGSNMAEM), 247–251 (STFTH), 266–268 (GTD), methionine 377, glutamine 381, asparagine 487, 513–514 (SD), lysine 536, aspartate 563, and 723–732 (TGRVLEHWHS). Tryptophan 799 provides a ligand contact to substrate. 2 residues coordinate Mo-bis(molybdopterin guanine dinucleotide): asparagine 807 and lysine 824.

The protein belongs to the prokaryotic molybdopterin-containing oxidoreductase family. NasA/NapA/NarB subfamily. As to quaternary structure, component of the periplasmic nitrate reductase NapAB complex composed of NapA and NapB. [4Fe-4S] cluster is required as a cofactor. The cofactor is Mo-bis(molybdopterin guanine dinucleotide). Post-translationally, predicted to be exported by the Tat system. The position of the signal peptide cleavage has not been experimentally proven.

Its subcellular location is the periplasm. The enzyme catalyses 2 Fe(II)-[cytochrome] + nitrate + 2 H(+) = 2 Fe(III)-[cytochrome] + nitrite + H2O. Catalytic subunit of the periplasmic nitrate reductase complex NapAB. Receives electrons from NapB and catalyzes the reduction of nitrate to nitrite. This chain is Periplasmic nitrate reductase, found in Rhizobium meliloti (strain 1021) (Ensifer meliloti).